A 264-amino-acid polypeptide reads, in one-letter code: S-adenosylmethionine decarboxylase proenzyme (264 aa).

The Schiff-base intermediate with substrate; via pyruvic acid role is filled by serine 113. Serine 113 carries the post-translational modification Pyruvic acid (Ser); by autocatalysis. Residue histidine 118 is the Proton acceptor; for processing activity of the active site. Cysteine 141 serves as the catalytic Proton donor; for catalytic activity.

Belongs to the prokaryotic AdoMetDC family. Type 2 subfamily. Heterooctamer of four alpha and four beta chains arranged as a tetramer of alpha/beta heterodimers. It depends on pyruvate as a cofactor. Post-translationally, is synthesized initially as an inactive proenzyme. Formation of the active enzyme involves a self-maturation process in which the active site pyruvoyl group is generated from an internal serine residue via an autocatalytic post-translational modification. Two non-identical subunits are generated from the proenzyme in this reaction, and the pyruvate is formed at the N-terminus of the alpha chain, which is derived from the carboxyl end of the proenzyme. The post-translation cleavage follows an unusual pathway, termed non-hydrolytic serinolysis, in which the side chain hydroxyl group of the serine supplies its oxygen atom to form the C-terminus of the beta chain, while the remainder of the serine residue undergoes an oxidative deamination to produce ammonia and the pyruvoyl group blocking the N-terminus of the alpha chain.

The catalysed reaction is S-adenosyl-L-methionine + H(+) = S-adenosyl 3-(methylsulfanyl)propylamine + CO2. It functions in the pathway amine and polyamine biosynthesis; S-adenosylmethioninamine biosynthesis; S-adenosylmethioninamine from S-adenosyl-L-methionine: step 1/1. In terms of biological role, catalyzes the decarboxylation of S-adenosylmethionine to S-adenosylmethioninamine (dcAdoMet), the propylamine donor required for the synthesis of the polyamines spermine and spermidine from the diamine putrescine. This Stenotrophomonas maltophilia (strain K279a) protein is S-adenosylmethionine decarboxylase proenzyme.